A 425-amino-acid chain; its full sequence is E3 ubiquitin-protein ligase CBLL2 (425 aa).

The RING-type zinc finger occupies 57–97 (CDKCDLPIKIYGRIIPCKHAFCYHCANLYDKVGYKVCPRCR). Residues 96–154 (CRYPVLRIEAHKRGSVFMCSIVQQCKRTYLSQKSLQAHIKRRHKRARKQVTSASLEKVR) form an HYB domain region. The segment at 112 to 138 (FMCSIVQQCKRTYLSQKSLQAHIKRRH) adopts a C2H2-type zinc-finger fold. Disordered stretches follow at residues 241 to 297 (DHIQ…HQMP) and 382 to 425 (TDAM…HRRY). The segment covering 398-408 (PCPPTRSPPPS) has biased composition (pro residues). A compositionally biased stretch (basic residues) spans 412–425 (GRSHHSHQRRHRRY).

As to quaternary structure, homodimer. In terms of tissue distribution, exclusively expressed in testis and sperm, including spermatocytes, round and elongated spermatids, and Leydig cells.

The protein localises to the cytoplasm. It catalyses the reaction S-ubiquitinyl-[E2 ubiquitin-conjugating enzyme]-L-cysteine + [acceptor protein]-L-lysine = [E2 ubiquitin-conjugating enzyme]-L-cysteine + N(6)-ubiquitinyl-[acceptor protein]-L-lysine.. It participates in protein modification; protein ubiquitination. Its function is as follows. E3 ubiquitin ligase catalyzing the covalent attachment of ubiquitin moieties onto substrate proteins. May operate on tyrosine-phosphorylated SRC substrates. The sequence is that of E3 ubiquitin-protein ligase CBLL2 from Homo sapiens (Human).